We begin with the raw amino-acid sequence, 387 residues long: Eukaryotic translation initiation factor 3 subunit M (387 aa).

In terms of domain architecture, PCI spans 181-340 (RSSKVMIELL…RKVHISSTMH (160 aa)).

This sequence belongs to the eIF-3 subunit M family. Component of the eukaryotic translation initiation factor 3 (eIF-3) complex. The eIF-3 complex interacts with pix.

It is found in the cytoplasm. It localises to the golgi apparatus. Its function is as follows. Component of the eukaryotic translation initiation factor 3 (eIF-3) complex, which is involved in protein synthesis of a specialized repertoire of mRNAs and, together with other initiation factors, stimulates binding of mRNA and methionyl-tRNAi to the 40S ribosome. The eIF-3 complex specifically targets and initiates translation of a subset of mRNAs involved in cell proliferation. This chain is Eukaryotic translation initiation factor 3 subunit M, found in Drosophila willistoni (Fruit fly).